Here is an 854-residue protein sequence, read N- to C-terminus: Valine--tRNA ligase (854 aa).

Positions 46 to 56 match the 'HIGH' region motif; it reads PTVSGDLHIGH. The short motif at 551 to 555 is the 'KMSKS' region element; that stretch reads KMSKS. K554 is an ATP binding site.

Belongs to the class-I aminoacyl-tRNA synthetase family. ValS type 2 subfamily. Monomer.

It is found in the cytoplasm. It catalyses the reaction tRNA(Val) + L-valine + ATP = L-valyl-tRNA(Val) + AMP + diphosphate. Catalyzes the attachment of valine to tRNA(Val). As ValRS can inadvertently accommodate and process structurally similar amino acids such as threonine, to avoid such errors, it has a 'posttransfer' editing activity that hydrolyzes mischarged Thr-tRNA(Val) in a tRNA-dependent manner. In Orientia tsutsugamushi (strain Boryong) (Rickettsia tsutsugamushi), this protein is Valine--tRNA ligase.